Reading from the N-terminus, the 230-residue chain is Ribosomal RNA large subunit methyltransferase E (230 aa).

S-adenosyl-L-methionine-binding residues include Gly76, Trp78, Asp99, Asp115, and Asp139. The Proton acceptor role is filled by Lys179.

This sequence belongs to the class I-like SAM-binding methyltransferase superfamily. RNA methyltransferase RlmE family.

It is found in the cytoplasm. It catalyses the reaction uridine(2552) in 23S rRNA + S-adenosyl-L-methionine = 2'-O-methyluridine(2552) in 23S rRNA + S-adenosyl-L-homocysteine + H(+). In terms of biological role, specifically methylates the uridine in position 2552 of 23S rRNA at the 2'-O position of the ribose in the fully assembled 50S ribosomal subunit. The sequence is that of Ribosomal RNA large subunit methyltransferase E from Nitrobacter winogradskyi (strain ATCC 25391 / DSM 10237 / CIP 104748 / NCIMB 11846 / Nb-255).